We begin with the raw amino-acid sequence, 543 residues long: Probable E3 ubiquitin-protein ligase ARI9 (543 aa).

The segment at 1–26 (MDFSDDDMIDNKSGEENYSYGGGNES) is disordered. Residues 124 to 332 (VNIQCGICFE…RHSGACNRFV (209 aa)) form a TRIAD supradomain region. Residues Cys128, Cys131, Cys145, His147, Cys150, Cys153, Cys173, Cys178, Cys217, Cys222, Cys240, Cys242, Cys247, Cys250, His255, Cys260, Cys287, and Cys290 each coordinate Zn(2+). The RING-type 1 zinc finger occupies 128 to 178 (CGICFESYTREEIARVSCGHPYCKTCWAGYITTKIEDGPGCLRVKCPEPSC). An IBR-type zinc finger spans residues 197–260 (EKYSRYILRS…SEDAHSPVDC (64 aa)). The RING-type 2; atypical zinc-finger motif lies at 287-317 (CPECKRPIEKNDGCNHMTCSAPCGHEFCWIC). Residue Cys300 is part of the active site. Cys305, Cys309, Cys314, Cys317, His324, and Cys328 together coordinate Zn(2+).

This sequence belongs to the RBR family. Ariadne subfamily. Requires Zn(2+) as cofactor.

It catalyses the reaction [E2 ubiquitin-conjugating enzyme]-S-ubiquitinyl-L-cysteine + [acceptor protein]-L-lysine = [E2 ubiquitin-conjugating enzyme]-L-cysteine + [acceptor protein]-N(6)-ubiquitinyl-L-lysine.. It participates in protein modification; protein ubiquitination. In terms of biological role, might act as an E3 ubiquitin-protein ligase, or as part of E3 complex, which accepts ubiquitin from specific E2 ubiquitin-conjugating enzymes and then transfers it to substrates. The polypeptide is Probable E3 ubiquitin-protein ligase ARI9 (ARI9) (Arabidopsis thaliana (Mouse-ear cress)).